We begin with the raw amino-acid sequence, 170 residues long: Large ribosomal subunit protein uL10 (170 aa).

This sequence belongs to the universal ribosomal protein uL10 family. In terms of assembly, part of the ribosomal stalk of the 50S ribosomal subunit. The N-terminus interacts with L11 and the large rRNA to form the base of the stalk. The C-terminus forms an elongated spine to which L12 dimers bind in a sequential fashion forming a multimeric L10(L12)X complex.

Its function is as follows. Forms part of the ribosomal stalk, playing a central role in the interaction of the ribosome with GTP-bound translation factors. The protein is Large ribosomal subunit protein uL10 (rplJ) of Chlamydia pneumoniae (Chlamydophila pneumoniae).